Reading from the N-terminus, the 369-residue chain is MISQEEVPQSTNHSLSFSSLPHEIVVSCLARVSGSYYPKLCLVSKQFRSIILSNEIYKARSHLGTKENRLFVWLKLPTRSYPSWFALWIKPNETLTNDGPIKKQSTGNLLVPLPCSYNYQVLVPSVIVGSETYIVGGYDDALSSSVWFYKNGKIHTLSKSPSMSVARIDAVVVGQYPNIYVMGGCDSDESMNWGEVFNIKTQTWEPLPDPGPEVRGQLVRKMKMQKKNVYVSSEKKDYIYDTEERTWKVTEAVFNFSWCVIEKVRYIYYNKNCWWLDTKSKDWRKIKGLDFLNKFRETDRIEIVNLDGKLVMIWDRFTLSKRNKKIWCAMIALEKCQGCEGIWGKIEWIGDVLMVPLSYSFLDCMVISI.

In terms of domain architecture, F-box spans 14–60 (SLSFSSLPHEIVVSCLARVSGSYYPKLCLVSKQFRSIILSNEIYKAR). 3 Kelch repeats span residues 131-177 (ETYI…GQYP), 178-224 (NIYV…KMKM), and 228-274 (NVYV…KNCW).

In Arabidopsis thaliana (Mouse-ear cress), this protein is Putative F-box/kelch-repeat protein At4g39760.